A 121-amino-acid polypeptide reads, in one-letter code: MSITKDQILEAFAAMSVMEVVELIEAMEEKFGVSAAAAVVSGGAEAAVVEEQTEFNVVLTAHGDNKVAVIKAIRSATGLGLKEAKAMSEAAPVAVKEGVSKEEAEALKKELTEAGASVEIK.

It belongs to the bacterial ribosomal protein bL12 family. Homodimer. Part of the ribosomal stalk of the 50S ribosomal subunit. Forms a multimeric L10(L12)X complex, where L10 forms an elongated spine to which 2 to 4 L12 dimers bind in a sequential fashion. Binds GTP-bound translation factors.

Forms part of the ribosomal stalk which helps the ribosome interact with GTP-bound translation factors. Is thus essential for accurate translation. The polypeptide is Large ribosomal subunit protein bL12 (Shewanella baltica (strain OS223)).